Consider the following 61-residue polypeptide: Translational regulator CsrA (61 aa).

This sequence belongs to the CsrA/RsmA family. As to quaternary structure, homodimer; the beta-strands of each monomer intercalate to form a hydrophobic core, while the alpha-helices form wings that extend away from the core.

It localises to the cytoplasm. A key translational regulator that binds mRNA to regulate translation initiation and/or mRNA stability. Mediates global changes in gene expression, shifting from rapid growth to stress survival by linking envelope stress, the stringent response and the catabolite repression systems. Usually binds in the 5'-UTR; binding at or near the Shine-Dalgarno sequence prevents ribosome-binding, repressing translation, binding elsewhere in the 5'-UTR can activate translation and/or stabilize the mRNA. Its function is antagonized by small RNA(s). The sequence is that of Translational regulator CsrA from Mannheimia succiniciproducens (strain KCTC 0769BP / MBEL55E).